The primary structure comprises 130 residues: Sec-independent protein translocase protein TatB (130 aa).

Residues 1–21 (MFDISFTELIVIGIVALVVIG) traverse the membrane as a helical segment. Residues 70-130 (VDSFQNSVHS…TPKEPRQSGS (61 aa)) form a disordered region. Composition is skewed to basic and acidic residues over residues 80 to 89 (EINKIQETAD) and 96 to 111 (PEKE…KTEP).

Belongs to the TatB family. In terms of assembly, the Tat system comprises two distinct complexes: a TatABC complex, containing multiple copies of TatA, TatB and TatC subunits, and a separate TatA complex, containing only TatA subunits. Substrates initially bind to the TatABC complex, which probably triggers association of the separate TatA complex to form the active translocon.

It localises to the cell inner membrane. In terms of biological role, part of the twin-arginine translocation (Tat) system that transports large folded proteins containing a characteristic twin-arginine motif in their signal peptide across membranes. Together with TatC, TatB is part of a receptor directly interacting with Tat signal peptides. TatB may form an oligomeric binding site that transiently accommodates folded Tat precursor proteins before their translocation. The protein is Sec-independent protein translocase protein TatB of Nitrosomonas eutropha (strain DSM 101675 / C91 / Nm57).